A 172-amino-acid chain; its full sequence is Molybdopterin synthase catalytic subunit (172 aa).

Position 20 is a phosphoserine (S20). Substrate contacts are provided by residues 127-128, K143, and 150-152; these read HR and KKE.

It belongs to the MoaE family. MOCS2B subfamily. In terms of assembly, heterotetramer; composed of 2 small (MOCS2A) and 2 large (MOCS2B) subunits.

It localises to the cytoplasm. It is found in the cytosol. The catalysed reaction is 2 [molybdopterin-synthase sulfur-carrier protein]-C-terminal-Gly-aminoethanethioate + cyclic pyranopterin phosphate + H2O = molybdopterin + 2 [molybdopterin-synthase sulfur-carrier protein]-C-terminal Gly-Gly + 2 H(+). The protein operates within cofactor biosynthesis; molybdopterin biosynthesis. Its function is as follows. Catalytic subunit of the molybdopterin synthase complex, a complex that catalyzes the conversion of precursor Z into molybdopterin. Acts by mediating the incorporation of 2 sulfur atoms from thiocarboxylated MOCS2A into precursor Z to generate a dithiolene group. The chain is Molybdopterin synthase catalytic subunit from Pongo abelii (Sumatran orangutan).